The following is a 393-amino-acid chain: Translation initiation factor eIF2B subunit beta (393 aa).

A disordered region spans residues 105–125 (VSSSNSSSPSQKRDIPSNEKL). A phosphoserine mark is found at Ser106, Ser108, and Ser112.

Belongs to the eIF-2B alpha/beta/delta subunits family. Component of the translation initiation factor 2B (eIF2B) complex which is a heterodecamer of two sets of five different subunits: alpha, beta, gamma, delta and epsilon. Subunits alpha, beta and delta comprise a regulatory subcomplex and subunits epsilon and gamma comprise a catalytic subcomplex. Within the complex, the hexameric regulatory complex resides at the center, with the two heterodimeric catalytic subcomplexes bound on opposite sides.

It localises to the cytoplasm. Its subcellular location is the cytosol. Its function is as follows. Acts as a component of the translation initiation factor 2B (eIF2B) complex, which catalyzes the exchange of GDP for GTP on the eukaryotic initiation factor 2 (eIF2) complex gamma subunit. Its guanine nucleotide exchange factor activity is repressed when bound to eIF2 complex phosphorylated on the alpha subunit, thereby limiting the amount of methionyl-initiator methionine tRNA available to the ribosome and consequently global translation is repressed. The polypeptide is Translation initiation factor eIF2B subunit beta (tif222) (Schizosaccharomyces pombe (strain 972 / ATCC 24843) (Fission yeast)).